The following is a 249-amino-acid chain: 5'-nucleotidase SurE 2 (249 aa).

A divalent metal cation is bound by residues D8, D9, S40, and N90.

This sequence belongs to the SurE nucleotidase family. A divalent metal cation serves as cofactor.

The protein localises to the cytoplasm. The catalysed reaction is a ribonucleoside 5'-phosphate + H2O = a ribonucleoside + phosphate. In terms of biological role, nucleotidase that shows phosphatase activity on nucleoside 5'-monophosphates. The polypeptide is 5'-nucleotidase SurE 2 (Pyrobaculum aerophilum (strain ATCC 51768 / DSM 7523 / JCM 9630 / CIP 104966 / NBRC 100827 / IM2)).